Consider the following 93-residue polypeptide: Alpha-defensin 23 (93 aa).

The N-terminal stretch at 1 to 19 (MKTLVLLSALILLAFQVQA) is a signal peptide. Positions 20–58 (DPIQNTDEETKTEEQPGKEDQAVSVSFGDPEGSSLQEES) are excised as a propeptide. The tract at residues 24–54 (NTDEETKTEEQPGKEDQAVSVSFGDPEGSSL) is disordered. The segment covering 27–40 (EETKTEEQPGKEDQ) has biased composition (basic and acidic residues). 3 disulfides stabilise this stretch: Cys64–Cys92, Cys66–Cys81, and Cys71–Cys91.

It belongs to the alpha-defensin family.

The protein localises to the secreted. May have microbicidal activities. This chain is Alpha-defensin 23 (Defa23), found in Mus musculus (Mouse).